Consider the following 60-residue polypeptide: Large ribosomal subunit protein bL32 (60 aa).

The interval methionine 1 to aspartate 60 is disordered. Over residues arginine 49–aspartate 60 the composition is skewed to basic residues.

The protein belongs to the bacterial ribosomal protein bL32 family.

This chain is Large ribosomal subunit protein bL32, found in Nitrosomonas eutropha (strain DSM 101675 / C91 / Nm57).